A 360-amino-acid chain; its full sequence is Photosystem II protein D1 (360 aa).

3 helical membrane-spanning segments follow: residues 29–46 (YIGW…TATS), 118–133 (HFLL…EWEL), and 142–156 (WIFV…AASA). Residue H118 participates in chlorophyll a binding. Y126 lines the pheophytin a pocket. Positions 170 and 189 each coordinate [CaMn4O5] cluster. Residues 197 to 218 (FHMAGVAGVFGGSLFSAMHGSL) traverse the membrane as a helical segment. Position 198 (H198) interacts with chlorophyll a. Residues H215 and 264–265 (SF) each bind a quinone. H215 is a binding site for Fe cation. Fe cation is bound at residue H272. A helical transmembrane segment spans residues 274–288 (FLALWPVLGIWLTAM). Residues H332, E333, D342, and A344 each contribute to the [CaMn4O5] cluster site. Positions 345 to 360 (SGDVLPVAFTAPAVNA) are excised as a propeptide.

It belongs to the reaction center PufL/M/PsbA/D family. As to quaternary structure, PSII is composed of 1 copy each of membrane proteins PsbA, PsbB, PsbC, PsbD, PsbE, PsbF, PsbH, PsbI, PsbJ, PsbK, PsbL, PsbM, PsbT, PsbX, PsbY, PsbZ, Psb30/Ycf12, at least 3 peripheral proteins of the oxygen-evolving complex and a large number of cofactors. It forms dimeric complexes. It depends on The D1/D2 heterodimer binds P680, chlorophylls that are the primary electron donor of PSII, and subsequent electron acceptors. It shares a non-heme iron and each subunit binds pheophytin, quinone, additional chlorophylls, carotenoids and lipids. D1 provides most of the ligands for the Mn4-Ca-O5 cluster of the oxygen-evolving complex (OEC). There is also a Cl(-1) ion associated with D1 and D2, which is required for oxygen evolution. The PSII complex binds additional chlorophylls, carotenoids and specific lipids. as a cofactor. Tyr-161 forms a radical intermediate that is referred to as redox-active TyrZ, YZ or Y-Z. In terms of processing, C-terminally processed by CTPA; processing is essential to allow assembly of the oxygen-evolving complex and thus photosynthetic growth.

The protein localises to the plastid. Its subcellular location is the chloroplast thylakoid membrane. It catalyses the reaction 2 a plastoquinone + 4 hnu + 2 H2O = 2 a plastoquinol + O2. Its function is as follows. Photosystem II (PSII) is a light-driven water:plastoquinone oxidoreductase that uses light energy to abstract electrons from H(2)O, generating O(2) and a proton gradient subsequently used for ATP formation. It consists of a core antenna complex that captures photons, and an electron transfer chain that converts photonic excitation into a charge separation. The D1/D2 (PsbA/PsbD) reaction center heterodimer binds P680, the primary electron donor of PSII as well as several subsequent electron acceptors. The sequence is that of Photosystem II protein D1 from Thalassiosira pseudonana (Marine diatom).